The primary structure comprises 504 residues: Ribose import ATP-binding protein RbsA (504 aa).

ABC transporter domains are found at residues 6 to 242 and 252 to 495; these read LELK…VGRR and VRHG…VGKT. 38–45 is an ATP binding site; sequence GENGAGKS.

This sequence belongs to the ABC transporter superfamily. Ribose importer (TC 3.A.1.2.1) family. The complex is composed of an ATP-binding protein (RbsA), two transmembrane proteins (RbsC) and a solute-binding protein (RbsB).

It is found in the cell inner membrane. The enzyme catalyses D-ribose(out) + ATP + H2O = D-ribose(in) + ADP + phosphate + H(+). Its function is as follows. Part of the ABC transporter complex RbsABC involved in ribose import. Responsible for energy coupling to the transport system. This is Ribose import ATP-binding protein RbsA from Photobacterium profundum (strain SS9).